The sequence spans 151 residues: 3-hydroxyacyl-[acyl-carrier-protein] dehydratase FabZ (151 aa).

Residue His54 is part of the active site.

This sequence belongs to the thioester dehydratase family. FabZ subfamily. Oligomer. In terms of processing, the N-terminus is blocked.

Its subcellular location is the cytoplasm. The catalysed reaction is a (3R)-hydroxyacyl-[ACP] = a (2E)-enoyl-[ACP] + H2O. Its function is as follows. Involved in unsaturated fatty acids biosynthesis. Catalyzes the dehydration of short chain beta-hydroxyacyl-ACPs and long chain saturated and unsaturated beta-hydroxyacyl-ACPs. The polypeptide is 3-hydroxyacyl-[acyl-carrier-protein] dehydratase FabZ (Escherichia coli (strain SE11)).